Reading from the N-terminus, the 246-residue chain is Bis(5'-nucleosyl)-tetraphosphatase PrpE [asymmetrical] (246 aa).

The protein belongs to the PrpE family. It depends on Ni(2+) as a cofactor.

It catalyses the reaction P(1),P(4)-bis(5'-guanosyl) tetraphosphate + H2O = GMP + GTP + 2 H(+). Asymmetrically hydrolyzes Ap4p to yield AMP and ATP. The protein is Bis(5'-nucleosyl)-tetraphosphatase PrpE [asymmetrical] of Bacillus cereus (strain ATCC 10987 / NRS 248).